The following is a 751-amino-acid chain: Dendritic arbor reduction protein 1 (751 aa).

The span at asparagine 57 to serine 89 shows a compositional bias: low complexity. Disordered regions lie at residues asparagine 57 to asparagine 167, leucine 248 to glutamine 275, threonine 304 to leucine 351, leucine 374 to glutamine 410, serine 458 to glycine 578, and serine 594 to isoleucine 639. A compositionally biased stretch (basic residues) spans histidine 95–histidine 125. The segment covering alanine 153–asparagine 167 has biased composition (polar residues). Composition is skewed to low complexity over residues serine 251–asparagine 267, arginine 309–leucine 351, and leucine 374–serine 393. Polar residues predominate over residues glycine 400 to glutamine 410. Composition is skewed to low complexity over residues serine 458–serine 513, aspartate 527–threonine 548, and serine 594–glutamine 610. 3 consecutive C2H2-type zinc fingers follow at residues histidine 664–histidine 688, tyrosine 694–histidine 718, and phenylalanine 724–histidine 746.

The protein belongs to the krueppel C2H2-type zinc-finger protein family. In terms of tissue distribution, highly enriched in the peripheral nervous system but is absent from the central nervous system. Expressed in neurons with more than one dendrite including da neurons, bd neurons and the dmd1 neuron but undetectable in neurons with single dendrites such as external sensory organ neurons and chodonotal neurons.

It is found in the nucleus. In terms of biological role, transcriptional regulator which promotes dendrite growth by suppressing, either directly or indirectly, the expression of the microtubule-severing protein spas. Determines multipolar neuron morphology in postmitotic neurons by positively regulating the expression of genes involved in nuclear positioning including several dynein genes and the nuclear migration protein nudC. This is Dendritic arbor reduction protein 1 from Drosophila melanogaster (Fruit fly).